The sequence spans 210 residues: Proteasome subunit beta 2 (210 aa).

A propeptide spans 1-12 (MSNNVEEKILHG) (removed in mature form; by autocatalysis). The active-site Nucleophile is threonine 13.

Belongs to the peptidase T1B family. The 20S proteasome core is composed of 14 alpha and 14 beta subunits that assemble into four stacked heptameric rings, resulting in a barrel-shaped structure. The two inner rings, each composed of seven catalytic beta subunits, are sandwiched by two outer rings, each composed of seven alpha subunits. The catalytic chamber with the active sites is on the inside of the barrel. Has a gated structure, the ends of the cylinder being occluded by the N-termini of the alpha-subunits. Is capped at one or both ends by the proteasome regulatory ATPase, PAN.

It localises to the cytoplasm. The catalysed reaction is Cleavage of peptide bonds with very broad specificity.. The formation of the proteasomal ATPase PAN-20S proteasome complex, via the docking of the C-termini of PAN into the intersubunit pockets in the alpha-rings, triggers opening of the gate for substrate entry. Interconversion between the open-gate and close-gate conformations leads to a dynamic regulation of the 20S proteasome proteolysis activity. Its function is as follows. Component of the proteasome core, a large protease complex with broad specificity involved in protein degradation. This chain is Proteasome subunit beta 2, found in Cenarchaeum symbiosum (strain A).